Consider the following 592-residue polypeptide: Neurogenic locus notch homolog protein (592 aa).

An N-terminal signal peptide occupies residues 1–19 (MIFVLTLVALCTAIHCPDG). EGF-like domains lie at 64-104 (YPSI…DYQV), 106-146 (VPEA…EKCT), 267-307 (YPEA…NTCI), 353-387 (NSQT…PTCE), 453-488 (VPNS…ALCE), and 546-588 (IDGE…KHCN). 15 cysteine pairs are disulfide-bonded: Cys-68–Cys-82, Cys-76–Cys-92, Cys-110–Cys-123, Cys-117–Cys-134, Cys-136–Cys-145, Cys-271–Cys-284, Cys-278–Cys-293, Cys-295–Cys-306, Cys-362–Cys-375, Cys-377–Cys-386, Cys-457–Cys-471, Cys-478–Cys-487, Cys-550–Cys-565, Cys-555–Cys-576, and Cys-578–Cys-587. Residue Asn-552 is glycosylated (N-linked (GlcNAc...) asparagine).

Belongs to the NOTCH family. In terms of assembly, interacts with EB1.

It localises to the cell projection. The protein localises to the cilium. It is found in the flagellum. Its subcellular location is the cytoplasm. The protein resides in the cytoskeleton. It localises to the flagellum axoneme. In Giardia intestinalis (strain ATCC 50803 / WB clone C6) (Giardia lamblia), this protein is Neurogenic locus notch homolog protein.